Consider the following 570-residue polypeptide: Acetolactate synthase (570 aa).

Glu-60 contacts thiamine diphosphate. Residues Gln-162, 266 to 287 (FRNQ…IGYD), and 308 to 327 (DEII…LIGD) each bind FAD. Residues 399 to 479 (SHAIWMSRYF…IVHIVWNDST (81 aa)) form a thiamine pyrophosphate binding region. A Mg(2+)-binding site is contributed by Asp-450.

It belongs to the TPP enzyme family. Mg(2+) serves as cofactor. The cofactor is thiamine diphosphate.

The catalysed reaction is 2 pyruvate + H(+) = (2S)-2-acetolactate + CO2. Its pathway is polyol metabolism; (R,R)-butane-2,3-diol biosynthesis; (R,R)-butane-2,3-diol from pyruvate: step 1/3. The polypeptide is Acetolactate synthase (alsS) (Bacillus subtilis (strain 168)).